We begin with the raw amino-acid sequence, 397 residues long: ATP-dependent RNA helicase eIF4A (397 aa).

The Q motif motif lies at 24–52 (DSFDDMNLKSELLRGIYAYGFERPSAIQQ). Positions 55–225 (IMPVIKGHDV…TKFMRDPVRI (171 aa)) constitute a Helicase ATP-binding domain. 68 to 75 (AQSGTGKT) provides a ligand contact to ATP. The DEAD box motif lies at 173–176 (DEAD). A Helicase C-terminal domain is found at 236-397 (GIKQFYIAVE…EMPMNVADLI (162 aa)).

The protein belongs to the DEAD box helicase family. eIF4A subfamily. As to quaternary structure, component of the eIF4F complex, which composition varies with external and internal environmental conditions. It is composed of at least eIF4A, eIF4E and eIF4G.

Its subcellular location is the cytoplasm. It carries out the reaction ATP + H2O = ADP + phosphate + H(+). Its function is as follows. ATP-dependent RNA helicase which is a subunit of the eIF4F complex involved in cap recognition and is required for mRNA binding to ribosome. In the current model of translation initiation, eIF4A unwinds RNA secondary structures in the 5'-UTR of mRNAs which is necessary to allow efficient binding of the small ribosomal subunit, and subsequent scanning for the initiator codon. This is ATP-dependent RNA helicase eIF4A (TIF1) from Chaetomium globosum (strain ATCC 6205 / CBS 148.51 / DSM 1962 / NBRC 6347 / NRRL 1970) (Soil fungus).